Consider the following 451-residue polypeptide: uncharacterized protein (451 aa).

Positions 2–60 (NVVLKQRIPLKIKRMGINGEGIGFYKKTLIFVPGALKGEEVFCQISSVRRNFAEAKLLK) constitute a TRAM domain. [4Fe-4S] cluster-binding residues include Cys73, Cys79, Cys82, and Cys162. 4 residues coordinate S-adenosyl-L-methionine: Gln283, Tyr312, Asp333, and Asp381. The Nucleophile role is filled by Cys408.

Belongs to the class I-like SAM-binding methyltransferase superfamily. RNA M5U methyltransferase family.

This is an uncharacterized protein from Streptococcus agalactiae serotype III (strain NEM316).